The sequence spans 148 residues: U2 snRNP component IST3 (148 aa).

Residues 31–109 (AYIYIGNLNR…RALKIDHTFY (79 aa)) form the RRM domain.

This sequence belongs to the IST3 family. In terms of assembly, component of the 45S U1.U2.U4/U6.U5 penta-snRNP particle, a subcomplex of the spliceosome. Belongs to the CWC complex (or CEF1-associated complex), a spliceosome sub-complex reminiscent of a late-stage spliceosome composed of the U2, U5 and U6 snRNAs and at least BUD13, BUD31, BRR2, CDC40, CEF1, CLF1, CUS1, CWC2, CWC15, CWC21, CWC22, CWC23, CWC24, CWC25, CWC27, ECM2, HSH155, IST3, ISY1, LEA1, MSL1, NTC20, PRP8, PRP9, PRP11, PRP19, PRP21, PRP22, PRP45, PRP46, SLU7, SMB1, SMD1, SMD2, SMD3, SMX2, SMX3, SNT309, SNU114, SPP2, SYF1, SYF2, RSE1 and YJU2. Belongs to the pre-mRNA retention and splicing (RES) complex composed of at least BUD13, IST3 and PML1. Subunit of the U2 snRNP. Interacts with RDS3.

It localises to the cytoplasm. It is found in the nucleus. In terms of biological role, required for pre-mRNA splicing and spliceosome assembly. As part of the pre-mRNA retention and splicing (RES) complex, required for nuclear pre-mRNA retention and efficient splicing. Required for MER1-activated splicing. This Saccharomyces cerevisiae (strain ATCC 204508 / S288c) (Baker's yeast) protein is U2 snRNP component IST3 (IST3).